The sequence spans 241 residues: Probable transcriptional regulatory protein AZOSEA20720 (241 aa).

The disordered stretch occupies residues 1–21 (MAGHSKWANIQHRKGRQDAKR).

The protein belongs to the TACO1 family.

Its subcellular location is the cytoplasm. This chain is Probable transcriptional regulatory protein AZOSEA20720, found in Aromatoleum aromaticum (strain DSM 19018 / LMG 30748 / EbN1) (Azoarcus sp. (strain EbN1)).